The chain runs to 367 residues: Glutamate 5-kinase (367 aa).

Lysine 10 provides a ligand contact to ATP. Substrate contacts are provided by serine 50, aspartate 137, and asparagine 149. Residues 169 to 170 (TD) and 211 to 217 (TGGMSTK) contribute to the ATP site. One can recognise a PUA domain in the interval 275–353 (AGEITVDEGA…QEIDAILGYE (79 aa)).

It belongs to the glutamate 5-kinase family.

The protein localises to the cytoplasm. It carries out the reaction L-glutamate + ATP = L-glutamyl 5-phosphate + ADP. Its pathway is amino-acid biosynthesis; L-proline biosynthesis; L-glutamate 5-semialdehyde from L-glutamate: step 1/2. In terms of biological role, catalyzes the transfer of a phosphate group to glutamate to form L-glutamate 5-phosphate. In Escherichia fergusonii (strain ATCC 35469 / DSM 13698 / CCUG 18766 / IAM 14443 / JCM 21226 / LMG 7866 / NBRC 102419 / NCTC 12128 / CDC 0568-73), this protein is Glutamate 5-kinase.